A 90-amino-acid polypeptide reads, in one-letter code: [Leu8]-phyllolitorin (90 aa).

The signal sequence occupies residues 1–30; the sequence is MSAVPFTRVLLISGFLAHLLLSTFVTLTVC. A propeptide spanning residues 31–48 is cleaved from the precursor; that stretch reads KEVTEESDDLSKRNVLQR. Pyrrolidone carboxylic acid is present on Q49. The residue at position 57 (M57) is a Methionine amide. A propeptide spanning residues 61-90 is cleaved from the precursor; sequence SLENTNRRSDEDMEISALFRGSPLKVKRSD.

Belongs to the bombesin/neuromedin-B/ranatensin family. Expressed by the skin glands.

The protein localises to the secreted. The sequence is that of [Leu8]-phyllolitorin from Phyllomedusa sauvagei (Sauvage's leaf frog).